The chain runs to 996 residues: Poly [ADP-ribose] polymerase (996 aa).

A DNA-binding region spans residues 1–369 (MEIDLPFKVE…TSTILKNISL (369 aa)). 2 consecutive PARP-type zinc fingers follow at residues 7-89 (FKVE…DNCT) and 114-203 (FGIE…PVIK). Zn(2+) contacts are provided by cysteine 19, cysteine 22, histidine 51, cysteine 54, cysteine 126, cysteine 129, histidine 161, and cysteine 164. 2 consecutive short sequence motifs (nuclear localization signal) follow at residues 211-214 (KKAK) and 232-235 (KIKK). Residues 220-358 (EEDAASIKEL…EVRAIRYIPP (139 aa)) form the PADR1 zinc-binding domain. The tract at residues 286–329 (GALLPCTDCKGRQLLFHKSGYLCNGDLTEWTKCTKLLKEPERKS) is zinc ribbon. Zn(2+)-binding residues include cysteine 291, cysteine 294, cysteine 308, and cysteine 318. Residues 370-507 (KKGDELDGPK…SIYTKSVPKS (138 aa)) form an automodification domain region. The region spanning 382 to 473 (RERPPLYNIE…AGAINYISSM (92 aa)) is the BRCT domain. The WGR domain occupies 527 to 625 (VAHVYVSRNK…ENFVKVAGRM (99 aa)). Residues 647 to 764 (KSKLPLSVQD…EIECAYSLLQ (118 aa)) enclose the PARP alpha-helical domain. Residues 773-996 (NPIDKHYEQL…YMLRMNFKYK (224 aa)) enclose the PARP catalytic domain.

This sequence belongs to the ARTD/PARP family.

It is found in the nucleus. It carries out the reaction NAD(+) + (ADP-D-ribosyl)n-acceptor = nicotinamide + (ADP-D-ribosyl)n+1-acceptor + H(+).. The enzyme catalyses L-aspartyl-[protein] + NAD(+) = 4-O-(ADP-D-ribosyl)-L-aspartyl-[protein] + nicotinamide. The catalysed reaction is L-glutamyl-[protein] + NAD(+) = 5-O-(ADP-D-ribosyl)-L-glutamyl-[protein] + nicotinamide. Its function is as follows. Poly-ADP-ribosyltransferase that mediates poly-ADP-ribosylation of proteins and plays a key role in DNA repair. Mainly mediates glutamate and aspartate ADP-ribosylation of target proteins: the ADP-D-ribosyl group of NAD(+) is transferred to the acceptor carboxyl group of glutamate and aspartate residues and further ADP-ribosyl groups are transferred to the 2'-position of the terminal adenosine moiety, building up a polymer with an average chain length of 20-30 units. In Sarcophaga peregrina (Flesh fly), this protein is Poly [ADP-ribose] polymerase.